Consider the following 363-residue polypeptide: Protein RecA (363 aa).

Residue Gly66–Thr73 participates in ATP binding. Positions Tyr327–Lys363 are disordered. Positions Ile329–Lys363 are enriched in basic and acidic residues.

Belongs to the RecA family.

Its subcellular location is the cytoplasm. Its function is as follows. Can catalyze the hydrolysis of ATP in the presence of single-stranded DNA, the ATP-dependent uptake of single-stranded DNA by duplex DNA, and the ATP-dependent hybridization of homologous single-stranded DNAs. It interacts with LexA causing its activation and leading to its autocatalytic cleavage. The protein is Protein RecA of Lactobacillus acidophilus (strain ATCC 700396 / NCK56 / N2 / NCFM).